The sequence spans 278 residues: HTH-type transcriptional activator RhaS (278 aa).

One can recognise an HTH araC/xylS-type domain in the interval 174–272 (NQLMAWLEDH…NWSPRDIRQG (99 aa)). 2 consecutive DNA-binding regions (H-T-H motif) follow at residues 191–212 (EAVAEQFSLSLRTLHRQLKQHT) and 239–262 (VTEIAYRCGFGDSNHFSTLFRREF).

Binds DNA as a dimer.

It localises to the cytoplasm. In terms of biological role, activates expression of the rhaBAD and rhaT operons. The polypeptide is HTH-type transcriptional activator RhaS (Salmonella heidelberg (strain SL476)).